Here is a 957-residue protein sequence, read N- to C-terminus: Bifunctional glutamine synthetase adenylyltransferase/adenylyl-removing enzyme (957 aa).

Residues 1-449 (MTQHLERPEL…VFDDIIGTDE (449 aa)) form an adenylyl removase region. An adenylyl transferase region spans residues 457–957 (SEQYNEMWTM…QEYLVPSSDE (501 aa)).

The protein belongs to the GlnE family. It depends on Mg(2+) as a cofactor.

The enzyme catalyses [glutamine synthetase]-O(4)-(5'-adenylyl)-L-tyrosine + phosphate = [glutamine synthetase]-L-tyrosine + ADP. It carries out the reaction [glutamine synthetase]-L-tyrosine + ATP = [glutamine synthetase]-O(4)-(5'-adenylyl)-L-tyrosine + diphosphate. Its function is as follows. Involved in the regulation of glutamine synthetase GlnA, a key enzyme in the process to assimilate ammonia. When cellular nitrogen levels are high, the C-terminal adenylyl transferase (AT) inactivates GlnA by covalent transfer of an adenylyl group from ATP to specific tyrosine residue of GlnA, thus reducing its activity. Conversely, when nitrogen levels are low, the N-terminal adenylyl removase (AR) activates GlnA by removing the adenylyl group by phosphorolysis, increasing its activity. The regulatory region of GlnE binds the signal transduction protein PII (GlnB) which indicates the nitrogen status of the cell. The sequence is that of Bifunctional glutamine synthetase adenylyltransferase/adenylyl-removing enzyme from Photobacterium profundum (strain SS9).